Reading from the N-terminus, the 430-residue chain is KIN17-like protein (430 aa).

The C2H2-type zinc-finger motif lies at 28 to 50 (CQMCQKQCRDENGFKCHCMSESH). The winged helix-turn-helix (wHTH) stretch occupies residues 51–160 (QRQMQVFGQA…KARLKRKRIK (110 aa)). The stretch at 147-183 (EQAVKARLKRKRIKSDLAEDERQERMIARQIERAQQS) forms a coiled coil. The Nuclear localization signal (NLS) motif lies at 155–158 (KRKR). Disordered regions lie at residues 179 to 230 (RAQQ…ANKA) and 261 to 284 (EEEDEVSARDKEKEELAKKKGKDA). Acidic residues predominate over residues 209-224 (EYSDSENDHEGQEEDA). Basic and acidic residues predominate over residues 261 to 278 (EEEDEVSARDKEKEELAK). The stretch at 283–312 (DAINAAEARRSALDELMKEEEKAKERSNRK) forms a coiled coil. The tract at residues 319–370 (GIVVKVMSKSLAEKGYCKQKGVVKRVIDKYVGEIEMLESKHVLRVDQDELET) is C-terminal subdomain A. The segment at 376 to 427 (GGLVRIVNGAYRGSNARLLSVDTERFCAKVQVEKGLYDGKVLKAIEYEDICK) is C-terminal subdomain B.

The protein belongs to the KIN17 family.

It localises to the nucleus. The protein is KIN17-like protein of Oryza sativa subsp. indica (Rice).